Reading from the N-terminus, the 800-residue chain is DNA topoisomerase 4 subunit A (800 aa).

A Topo IIA-type catalytic domain is found at L31 to E495. Y119 serves as the catalytic O-(5'-phospho-DNA)-tyrosine intermediate.

This sequence belongs to the type II topoisomerase GyrA/ParC subunit family. ParC type 2 subfamily. As to quaternary structure, heterotetramer composed of ParC and ParE.

It is found in the cell membrane. The catalysed reaction is ATP-dependent breakage, passage and rejoining of double-stranded DNA.. Its function is as follows. Topoisomerase IV is essential for chromosome segregation. It relaxes supercoiled DNA. Performs the decatenation events required during the replication of a circular DNA molecule. The polypeptide is DNA topoisomerase 4 subunit A (Staphylococcus aureus).